The sequence spans 343 residues: Glycerol-3-phosphate dehydrogenase [NAD(P)+] (343 aa).

Residues Ser-11, Trp-12, Arg-32, and Lys-106 each coordinate NADPH. 3 residues coordinate sn-glycerol 3-phosphate: Lys-106, Gly-137, and Ser-139. Ala-141 contributes to the NADPH binding site. Lys-192, Asp-245, Ser-255, Arg-256, and Asn-257 together coordinate sn-glycerol 3-phosphate. Lys-192 serves as the catalytic Proton acceptor. An NADPH-binding site is contributed by Arg-256. Residues Val-280 and Glu-282 each coordinate NADPH.

This sequence belongs to the NAD-dependent glycerol-3-phosphate dehydrogenase family.

It is found in the cytoplasm. It carries out the reaction sn-glycerol 3-phosphate + NAD(+) = dihydroxyacetone phosphate + NADH + H(+). It catalyses the reaction sn-glycerol 3-phosphate + NADP(+) = dihydroxyacetone phosphate + NADPH + H(+). It functions in the pathway membrane lipid metabolism; glycerophospholipid metabolism. Its function is as follows. Catalyzes the reduction of the glycolytic intermediate dihydroxyacetone phosphate (DHAP) to sn-glycerol 3-phosphate (G3P), the key precursor for phospholipid synthesis. In Syntrophomonas wolfei subsp. wolfei (strain DSM 2245B / Goettingen), this protein is Glycerol-3-phosphate dehydrogenase [NAD(P)+].